A 451-amino-acid polypeptide reads, in one-letter code: Bifunctional protein GlmU (451 aa).

The interval 1 to 229 is pyrophosphorylase; it reads MQRHAIVLAA…FEEIMGVNDR (229 aa). UDP-N-acetyl-alpha-D-glucosamine contacts are provided by residues 8 to 11, lysine 22, glutamine 72, and 77 to 78; these read LAAG and GT. Aspartate 102 contributes to the Mg(2+) binding site. Positions 139, 154, and 227 each coordinate UDP-N-acetyl-alpha-D-glucosamine. Mg(2+) is bound at residue asparagine 227. The tract at residues 230–250 is linker; sequence VMLSEAEKAFRKRINEQHMKN. Positions 251–451 are N-acetyltransferase; that stretch reads GVTIIDPVTT…QTTKEGYLKK (201 aa). UDP-N-acetyl-alpha-D-glucosamine is bound by residues arginine 332 and lysine 350. Histidine 362 serves as the catalytic Proton acceptor. The UDP-N-acetyl-alpha-D-glucosamine site is built by tyrosine 365 and asparagine 376. Acetyl-CoA contacts are provided by residues 385–386, alanine 422, and arginine 439; that span reads NY.

It in the N-terminal section; belongs to the N-acetylglucosamine-1-phosphate uridyltransferase family. In the C-terminal section; belongs to the transferase hexapeptide repeat family. As to quaternary structure, homotrimer. Requires Mg(2+) as cofactor.

The protein localises to the cytoplasm. It catalyses the reaction alpha-D-glucosamine 1-phosphate + acetyl-CoA = N-acetyl-alpha-D-glucosamine 1-phosphate + CoA + H(+). The catalysed reaction is N-acetyl-alpha-D-glucosamine 1-phosphate + UTP + H(+) = UDP-N-acetyl-alpha-D-glucosamine + diphosphate. Its pathway is nucleotide-sugar biosynthesis; UDP-N-acetyl-alpha-D-glucosamine biosynthesis; N-acetyl-alpha-D-glucosamine 1-phosphate from alpha-D-glucosamine 6-phosphate (route II): step 2/2. It functions in the pathway nucleotide-sugar biosynthesis; UDP-N-acetyl-alpha-D-glucosamine biosynthesis; UDP-N-acetyl-alpha-D-glucosamine from N-acetyl-alpha-D-glucosamine 1-phosphate: step 1/1. It participates in bacterial outer membrane biogenesis; LPS lipid A biosynthesis. Functionally, catalyzes the last two sequential reactions in the de novo biosynthetic pathway for UDP-N-acetylglucosamine (UDP-GlcNAc). The C-terminal domain catalyzes the transfer of acetyl group from acetyl coenzyme A to glucosamine-1-phosphate (GlcN-1-P) to produce N-acetylglucosamine-1-phosphate (GlcNAc-1-P), which is converted into UDP-GlcNAc by the transfer of uridine 5-monophosphate (from uridine 5-triphosphate), a reaction catalyzed by the N-terminal domain. The sequence is that of Bifunctional protein GlmU from Staphylococcus saprophyticus subsp. saprophyticus (strain ATCC 15305 / DSM 20229 / NCIMB 8711 / NCTC 7292 / S-41).